Reading from the N-terminus, the 203-residue chain is Endo-type membrane-bound lytic murein transglycosylase A (203 aa).

Residues 1–15 (MKLRWFAFLIVLLAG) form the signal peptide. Residue Cys-16 is the site of N-palmitoyl cysteine attachment. Residue Cys-16 is the site of S-diacylglycerol cysteine attachment.

Belongs to the transglycosylase Slt family.

The protein resides in the cell outer membrane. It catalyses the reaction Endolytic cleavage of the (1-&gt;4)-beta-glycosidic linkage between N-acetylmuramic acid (MurNAc) and N-acetylglucosamine (GlcNAc) residues in peptidoglycan with concomitant formation of a 1,6-anhydrobond in the MurNAc residue.. Murein-degrading enzyme. May play a role in recycling of muropeptides during cell elongation and/or cell division. Preferentially cleaves at a distance of more than two disaccharide units from the ends of the glycan chain. In Escherichia coli (strain K12 / MC4100 / BW2952), this protein is Endo-type membrane-bound lytic murein transglycosylase A.